The following is a 336-amino-acid chain: MLYRLARTGFFQLDAEKAHDLAIQNFKRFTGTPIDLLYRQQLPNRPVECMGLTFKNPVGLAAGLDKNGECIDAFGAMGFGFVEVGTVTPRPQAGNDKPRLFRLVEAEGIINRMGFNNLGVDNLIENVKKSNYDGILGINIGKNKDTPIEKGAEDYLICMEKVYQYAGYIAVNISSPNTPGLRSLQYGEALDDLLSELKTKQSELEEKHGKYVPLALKIAPDLSDDEISQICESLIKNKIDGVIATNTTLDRSIVEGMKHCDEAGGLSGRPVQSRSTEVVRKLHEELGDALPIIGVGGVDSYVAAKEKMMAGAKLVQVYSGFIYKGPGLVGDIVKNL.

Residues 62–66 (AGLDK) and T86 contribute to the FMN site. Substrate is bound at residue K66. 111–115 (NRMGF) provides a ligand contact to substrate. The FMN site is built by N139 and N172. A substrate-binding site is contributed by N172. S175 (nucleophile) is an active-site residue. N177 is a binding site for substrate. Residues K217 and T245 each contribute to the FMN site. Substrate is bound at residue 246–247 (NT). FMN is bound by residues G268, G297, and 318–319 (YS).

Belongs to the dihydroorotate dehydrogenase family. Type 2 subfamily. Monomer. It depends on FMN as a cofactor.

Its subcellular location is the cell membrane. The enzyme catalyses (S)-dihydroorotate + a quinone = orotate + a quinol. It participates in pyrimidine metabolism; UMP biosynthesis via de novo pathway; orotate from (S)-dihydroorotate (quinone route): step 1/1. Catalyzes the conversion of dihydroorotate to orotate with quinone as electron acceptor. The polypeptide is Dihydroorotate dehydrogenase (quinone) (Vibrio atlanticus (strain LGP32) (Vibrio splendidus (strain Mel32))).